The primary structure comprises 460 residues: Protein unc-93 homolog A (460 aa).

5 consecutive transmembrane segments (helical) span residues 7 to 27 (ILIV…LQSL), 41 to 61 (SLSV…PIVI), 68 to 88 (WTIV…FYAS), 89 to 109 (WYTL…LWAA), and 139 to 159 (LFFL…SLIF). Asn168 and Asn189 each carry an N-linked (GlcNAc...) asparagine glycan. 6 helical membrane-spanning segments follow: residues 203–223 (TLLG…AVFL), 292–312 (FVGY…LLFG), 321–341 (ICLF…LLLW), 345–365 (PNDF…DAIW), 390–410 (LWES…CVSV), and 412–432 (LYIL…VEYL).

This sequence belongs to the unc-93 family.

It is found in the membrane. The sequence is that of Protein unc-93 homolog A (unc93a) from Xenopus laevis (African clawed frog).